A 359-amino-acid chain; its full sequence is GTP 3',8-cyclase 1 (359 aa).

One can recognise a Radical SAM core domain in the interval 21–241 (RCRRMMGDLR…SLEKRYGRIE (221 aa)). R30 is a binding site for GTP. 2 residues coordinate [4Fe-4S] cluster: C37 and C41. Y43 is a binding site for S-adenosyl-L-methionine. C44 lines the [4Fe-4S] cluster pocket. Residue R80 coordinates GTP. G84 is an S-adenosyl-L-methionine binding site. Residue T115 participates in GTP binding. S139 is an S-adenosyl-L-methionine binding site. GTP is bound at residue K176. M210 lines the S-adenosyl-L-methionine pocket. [4Fe-4S] cluster is bound by residues C273 and C276. GTP is bound at residue 278–280 (RSR). A [4Fe-4S] cluster-binding site is contributed by C290.

Belongs to the radical SAM superfamily. MoaA family. In terms of assembly, monomer and homodimer. The cofactor is [4Fe-4S] cluster.

The enzyme catalyses GTP + AH2 + S-adenosyl-L-methionine = (8S)-3',8-cyclo-7,8-dihydroguanosine 5'-triphosphate + 5'-deoxyadenosine + L-methionine + A + H(+). It functions in the pathway cofactor biosynthesis; molybdopterin biosynthesis. Its function is as follows. Catalyzes the cyclization of GTP to (8S)-3',8-cyclo-7,8-dihydroguanosine 5'-triphosphate. This is GTP 3',8-cyclase 1 from Mycobacterium tuberculosis (strain CDC 1551 / Oshkosh).